The sequence spans 101 residues: Putative pterin-4-alpha-carbinolamine dehydratase (101 aa).

Belongs to the pterin-4-alpha-carbinolamine dehydratase family.

It carries out the reaction (4aS,6R)-4a-hydroxy-L-erythro-5,6,7,8-tetrahydrobiopterin = (6R)-L-erythro-6,7-dihydrobiopterin + H2O. The sequence is that of Putative pterin-4-alpha-carbinolamine dehydratase from Rhodopseudomonas palustris (strain HaA2).